Here is a 992-residue protein sequence, read N- to C-terminus: Vacuolar membrane protease (992 aa).

The Cytoplasmic segment spans residues methionine 1–threonine 24. Residues phenylalanine 25 to valine 45 form a helical membrane-spanning segment. The Vacuolar segment spans residues proline 46–threonine 390. Residues asparagine 59, asparagine 115, and asparagine 118 are each glycosylated (N-linked (GlcNAc...) asparagine). The Zn(2+) site is built by histidine 174 and aspartate 186. The active-site Proton acceptor is glutamate 220. Glutamate 221 contributes to the Zn(2+) binding site. N-linked (GlcNAc...) asparagine glycosylation is present at asparagine 237. Residues glutamate 246 and histidine 319 each contribute to the Zn(2+) site. Residues leucine 391–isoleucine 411 form a helical membrane-spanning segment. The Cytoplasmic portion of the chain corresponds to alanine 412–threonine 446. Residues proline 447 to isoleucine 467 traverse the membrane as a helical segment. Over asparagine 468–serine 474 the chain is Vacuolar. A helical membrane pass occupies residues serine 475–alanine 495. Residues arginine 496–arginine 508 lie on the Cytoplasmic side of the membrane. Residues alanine 509–tyrosine 529 form a helical membrane-spanning segment. The Vacuolar portion of the chain corresponds to alanine 530–lysine 533. The chain crosses the membrane as a helical span at residues glycine 534–valine 554. Residues serine 555–tryptophan 671 lie on the Cytoplasmic side of the membrane. A disordered region spans residues arginine 579–serine 620. The helical transmembrane segment at isoleucine 672 to leucine 692 threads the bilayer. At leucine 693–phenylalanine 708 the chain is on the vacuolar side. A helical transmembrane segment spans residues isoleucine 709 to isoleucine 729. At histidine 730–valine 736 the chain is on the cytoplasmic side. A helical membrane pass occupies residues proline 737–phenylalanine 757. Over serine 758–glutamine 992 the chain is Vacuolar. 3 N-linked (GlcNAc...) asparagine glycosylation sites follow: asparagine 805, asparagine 846, and asparagine 954.

The protein belongs to the peptidase M28 family. Zn(2+) serves as cofactor.

It localises to the vacuole membrane. Functionally, may be involved in vacuolar sorting and osmoregulation. The polypeptide is Vacuolar membrane protease (Paracoccidioides brasiliensis (strain Pb18)).